Reading from the N-terminus, the 230-residue chain is Cytochrome c oxidase subunit 2 (230 aa).

Residues 1–26 (MATPAQLGLMDAASPVMEEMIYFHDH) are Mitochondrial intermembrane-facing. The chain crosses the membrane as a helical span at residues 27–48 (VMLVLILITCLIFYSMLVLISS). Residues 49–62 (KYIYRFLTDGHVIE) are Mitochondrial matrix-facing. The chain crosses the membrane as a helical span at residues 63–82 (TVWTVIPAIILVVVALPSLK). Residues 83–230 (LLYLTDELDN…GWCDMMLDEE (148 aa)) lie on the Mitochondrial intermembrane side of the membrane. Cu cation contacts are provided by H161, C196, E198, C200, H204, and M207. E198 is a binding site for Mg(2+).

This sequence belongs to the cytochrome c oxidase subunit 2 family. Component of the cytochrome c oxidase (complex IV, CIV), a multisubunit enzyme composed of a catalytic core of 3 subunits and several supernumerary subunits. The complex exists as a monomer or a dimer and forms supercomplexes (SCs) in the inner mitochondrial membrane with ubiquinol-cytochrome c oxidoreductase (cytochrome b-c1 complex, complex III, CIII). Cu cation serves as cofactor.

The protein localises to the mitochondrion inner membrane. It carries out the reaction 4 Fe(II)-[cytochrome c] + O2 + 8 H(+)(in) = 4 Fe(III)-[cytochrome c] + 2 H2O + 4 H(+)(out). Component of the cytochrome c oxidase, the last enzyme in the mitochondrial electron transport chain which drives oxidative phosphorylation. The respiratory chain contains 3 multisubunit complexes succinate dehydrogenase (complex II, CII), ubiquinol-cytochrome c oxidoreductase (cytochrome b-c1 complex, complex III, CIII) and cytochrome c oxidase (complex IV, CIV), that cooperate to transfer electrons derived from NADH and succinate to molecular oxygen, creating an electrochemical gradient over the inner membrane that drives transmembrane transport and the ATP synthase. Cytochrome c oxidase is the component of the respiratory chain that catalyzes the reduction of oxygen to water. Electrons originating from reduced cytochrome c in the intermembrane space (IMS) are transferred via the dinuclear copper A center (CU(A)) of subunit 2 and heme A of subunit 1 to the active site in subunit 1, a binuclear center (BNC) formed by heme A3 and copper B (CU(B)). The BNC reduces molecular oxygen to 2 water molecules using 4 electrons from cytochrome c in the IMS and 4 protons from the mitochondrial matrix. The sequence is that of Cytochrome c oxidase subunit 2 (COII) from Branchiostoma floridae (Florida lancelet).